A 264-amino-acid chain; its full sequence is 3-methyl-2-oxobutanoate hydroxymethyltransferase (264 aa).

Mg(2+) contacts are provided by aspartate 45 and aspartate 84. 3-methyl-2-oxobutanoate is bound by residues 45-46 (DS), aspartate 84, and lysine 112. Glutamate 114 contacts Mg(2+). Glutamate 181 (proton acceptor) is an active-site residue.

This sequence belongs to the PanB family. In terms of assembly, homodecamer; pentamer of dimers. Requires Mg(2+) as cofactor.

The protein resides in the cytoplasm. The catalysed reaction is 3-methyl-2-oxobutanoate + (6R)-5,10-methylene-5,6,7,8-tetrahydrofolate + H2O = 2-dehydropantoate + (6S)-5,6,7,8-tetrahydrofolate. It participates in cofactor biosynthesis; (R)-pantothenate biosynthesis; (R)-pantoate from 3-methyl-2-oxobutanoate: step 1/2. Its function is as follows. Catalyzes the reversible reaction in which hydroxymethyl group from 5,10-methylenetetrahydrofolate is transferred onto alpha-ketoisovalerate to form ketopantoate. The polypeptide is 3-methyl-2-oxobutanoate hydroxymethyltransferase (Cronobacter sakazakii (strain ATCC BAA-894) (Enterobacter sakazakii)).